Reading from the N-terminus, the 88-residue chain is Sec-independent protein translocase protein TatA (88 aa).

The helical transmembrane segment at 1–21 threads the bilayer; it reads MGSLSPWHWAILAVVVIVLFG. The span at 43 to 52 shows a compositional bias: basic and acidic residues; that stretch reads MREMQSETKA. Positions 43–88 are disordered; sequence MREMQSETKAEPSAIETNTANPTPVQSQRIDPAAATGQDQTEARPA. A compositionally biased stretch (polar residues) spans 57–71; the sequence is IETNTANPTPVQSQR.

Belongs to the TatA/E family. The Tat system comprises two distinct complexes: a TatABC complex, containing multiple copies of TatA, TatB and TatC subunits, and a separate TatA complex, containing only TatA subunits. Substrates initially bind to the TatABC complex, which probably triggers association of the separate TatA complex to form the active translocon.

The protein resides in the cell membrane. Its function is as follows. Part of the twin-arginine translocation (Tat) system that transports large folded proteins containing a characteristic twin-arginine motif in their signal peptide across membranes. TatA could form the protein-conducting channel of the Tat system. This Mycobacterium marinum (strain ATCC BAA-535 / M) protein is Sec-independent protein translocase protein TatA.